Reading from the N-terminus, the 715-residue chain is Fatty acid oxidation complex subunit alpha (715 aa).

The tract at residues 1–190 (MDMTSAFTLN…RVGLVDEVVP (190 aa)) is enoyl-CoA hydratase. The tract at residues 306–715 (GPLASVGVLG…WNSGETDLKE (410 aa)) is 3-hydroxyacyl-CoA dehydrogenase.

This sequence in the N-terminal section; belongs to the enoyl-CoA hydratase/isomerase family. In the central section; belongs to the 3-hydroxyacyl-CoA dehydrogenase family. As to quaternary structure, heterotetramer of two alpha chains (FadJ) and two beta chains (FadI).

The protein resides in the cytoplasm. It carries out the reaction a (3S)-3-hydroxyacyl-CoA = a (2E)-enoyl-CoA + H2O. The catalysed reaction is a 4-saturated-(3S)-3-hydroxyacyl-CoA = a (3E)-enoyl-CoA + H2O. The enzyme catalyses a (3S)-3-hydroxyacyl-CoA + NAD(+) = a 3-oxoacyl-CoA + NADH + H(+). It catalyses the reaction (3S)-3-hydroxybutanoyl-CoA = (3R)-3-hydroxybutanoyl-CoA. The protein operates within lipid metabolism; fatty acid beta-oxidation. Its function is as follows. Catalyzes the formation of a hydroxyacyl-CoA by addition of water on enoyl-CoA. Also exhibits 3-hydroxyacyl-CoA epimerase and 3-hydroxyacyl-CoA dehydrogenase activities. The chain is Fatty acid oxidation complex subunit alpha from Citrobacter koseri (strain ATCC BAA-895 / CDC 4225-83 / SGSC4696).